We begin with the raw amino-acid sequence, 212 residues long: Probable dual specificity protein phosphatase DDB_G0269404 (212 aa).

Positions 30 to 169 (FDAQEVIPNL…LINYEATILK (140 aa)) constitute a Tyrosine-protein phosphatase domain. Cys113 serves as the catalytic Phosphocysteine intermediate.

The protein belongs to the protein-tyrosine phosphatase family. Non-receptor class dual specificity subfamily.

The catalysed reaction is O-phospho-L-tyrosyl-[protein] + H2O = L-tyrosyl-[protein] + phosphate. It carries out the reaction O-phospho-L-seryl-[protein] + H2O = L-seryl-[protein] + phosphate. It catalyses the reaction O-phospho-L-threonyl-[protein] + H2O = L-threonyl-[protein] + phosphate. Functionally, has a dual specificity toward Ser/Thr and Tyr-containing proteins. The sequence is that of Probable dual specificity protein phosphatase DDB_G0269404 from Dictyostelium discoideum (Social amoeba).